The sequence spans 111 residues: Small ribosomal subunit protein uS10 (111 aa).

It belongs to the universal ribosomal protein uS10 family. Part of the 30S ribosomal subunit.

Its function is as follows. Involved in the binding of tRNA to the ribosomes. In Protochlamydia amoebophila (strain UWE25), this protein is Small ribosomal subunit protein uS10.